The chain runs to 176 residues: Large ribosomal subunit protein uL6 (176 aa).

This sequence belongs to the universal ribosomal protein uL6 family. As to quaternary structure, part of the 50S ribosomal subunit.

Functionally, this protein binds to the 23S rRNA, and is important in its secondary structure. It is located near the subunit interface in the base of the L7/L12 stalk, and near the tRNA binding site of the peptidyltransferase center. The polypeptide is Large ribosomal subunit protein uL6 (Burkholderia thailandensis (strain ATCC 700388 / DSM 13276 / CCUG 48851 / CIP 106301 / E264)).